The primary structure comprises 111 residues: PHD finger-like domain-containing protein 5A (111 aa).

It belongs to the PHF5 family.

The chain is PHD finger-like domain-containing protein 5A from Drosophila melanogaster (Fruit fly).